Reading from the N-terminus, the 185-residue chain is Ribosome-recycling factor (185 aa).

Belongs to the RRF family.

Its subcellular location is the cytoplasm. In terms of biological role, responsible for the release of ribosomes from messenger RNA at the termination of protein biosynthesis. May increase the efficiency of translation by recycling ribosomes from one round of translation to another. This chain is Ribosome-recycling factor, found in Ehrlichia ruminantium (strain Welgevonden).